Here is a 211-residue protein sequence, read N- to C-terminus: Pyridoxine/pyridoxamine 5'-phosphate oxidase (211 aa).

Substrate contacts are provided by residues 7 to 10 (RTDY) and lysine 65. FMN-binding positions include 60 to 65 (RILLIK), 75 to 76 (FT), arginine 81, and lysine 82. Positions 122, 126, and 130 each coordinate substrate. FMN contacts are provided by residues 139–140 (QS) and tryptophan 183. 189 to 191 (RLH) serves as a coordination point for substrate. An FMN-binding site is contributed by arginine 193.

It belongs to the pyridoxamine 5'-phosphate oxidase family. As to quaternary structure, homodimer. It depends on FMN as a cofactor.

The enzyme catalyses pyridoxamine 5'-phosphate + O2 + H2O = pyridoxal 5'-phosphate + H2O2 + NH4(+). It carries out the reaction pyridoxine 5'-phosphate + O2 = pyridoxal 5'-phosphate + H2O2. The protein operates within cofactor metabolism; pyridoxal 5'-phosphate salvage; pyridoxal 5'-phosphate from pyridoxamine 5'-phosphate: step 1/1. Its pathway is cofactor metabolism; pyridoxal 5'-phosphate salvage; pyridoxal 5'-phosphate from pyridoxine 5'-phosphate: step 1/1. Catalyzes the oxidation of either pyridoxine 5'-phosphate (PNP) or pyridoxamine 5'-phosphate (PMP) into pyridoxal 5'-phosphate (PLP). The sequence is that of Pyridoxine/pyridoxamine 5'-phosphate oxidase from Janthinobacterium sp. (strain Marseille) (Minibacterium massiliensis).